Consider the following 195-residue polypeptide: Large ribosomal subunit protein bL25 (195 aa).

It belongs to the bacterial ribosomal protein bL25 family. CTC subfamily. Part of the 50S ribosomal subunit; part of the 5S rRNA/L5/L18/L25 subcomplex. Contacts the 5S rRNA. Binds to the 5S rRNA independently of L5 and L18.

Its function is as follows. This is one of the proteins that binds to the 5S RNA in the ribosome where it forms part of the central protuberance. The polypeptide is Large ribosomal subunit protein bL25 (Geobacter metallireducens (strain ATCC 53774 / DSM 7210 / GS-15)).